The following is a 941-amino-acid chain: Isoleucine--tRNA ligase (941 aa).

The 'HIGH' region signature appears at 69–79; sequence PYANGDIHIGH. Glutamate 589 is a binding site for L-isoleucyl-5'-AMP. Positions 630–634 match the 'KMSKS' region motif; sequence KMSKS. Lysine 633 provides a ligand contact to ATP. Zn(2+) is bound by residues cysteine 915, cysteine 918, cysteine 932, and cysteine 935.

It belongs to the class-I aminoacyl-tRNA synthetase family. IleS type 1 subfamily. Monomer. Requires Zn(2+) as cofactor.

Its subcellular location is the cytoplasm. It catalyses the reaction tRNA(Ile) + L-isoleucine + ATP = L-isoleucyl-tRNA(Ile) + AMP + diphosphate. Its function is as follows. Catalyzes the attachment of isoleucine to tRNA(Ile). As IleRS can inadvertently accommodate and process structurally similar amino acids such as valine, to avoid such errors it has two additional distinct tRNA(Ile)-dependent editing activities. One activity is designated as 'pretransfer' editing and involves the hydrolysis of activated Val-AMP. The other activity is designated 'posttransfer' editing and involves deacylation of mischarged Val-tRNA(Ile). In Zymomonas mobilis subsp. mobilis (strain ATCC 31821 / ZM4 / CP4), this protein is Isoleucine--tRNA ligase.